The primary structure comprises 397 residues: RNA polymerase II elongation factor ELL3 (397 aa).

Disordered stretches follow at residues 164–219 and 237–284; these read VSDP…KRSV and VPSP…PEDI. Polar residues predominate over residues 168–178; that stretch reads LASNQGQSLPG. Acidic residues predominate over residues 250-262; the sequence is QEGEDWEQEDEDM. Over residues 269–281 the composition is skewed to low complexity; that stretch reads SSSVQEDSESPSP. Residues 285-395 form the OCEL domain; that stretch reads PDYLLQYRAI…LILEFEEKNR (111 aa).

This sequence belongs to the ELL/occludin family. In terms of assembly, interacts with AFF4. Component of the super elongation complex (SEC), at least composed of EAF1, EAF2, CDK9, MLLT3/AF9, AFF (AFF1 or AFF4), the P-TEFb complex and ELL (ELL, ELL2 or ELL3). Component of the little elongation complex (LEC), at least composed of ELL (ELL, ELL2 or ELL3), ZC3H8, ICE1 and ICE2. As to expression, testis specific.

The protein resides in the nucleus. Its function is as follows. Enhancer-binding elongation factor that specifically binds enhancers in embryonic stem cells (ES cells), marks them, and is required for their future activation during stem cell specification. Does not only bind to enhancer regions of active genes, but also marks the enhancers that are in a poised or inactive state in ES cells and is required for establishing proper RNA polymerase II occupancy at developmentally regulated genes in a cohesin-dependent manner. Probably required for priming developmentally regulated genes for later recruitment of the super elongation complex (SEC), for transcriptional activation during differentiation. Required for recruitment of P-TEFb within SEC during differentiation. Probably preloaded on germ cell chromatin, suggesting that it may prime gene activation by marking enhancers as early as in the germ cells. Promoting epithelial-mesenchymal transition (EMT). Elongation factor component of the super elongation complex (SEC), a complex required to increase the catalytic rate of RNA polymerase II transcription by suppressing transient pausing by the polymerase at multiple sites along the DNA. Component of the little elongation complex (LEC), a complex required to regulate small nuclear RNA (snRNA) gene transcription by RNA polymerase II and III. The polypeptide is RNA polymerase II elongation factor ELL3 (ELL3) (Homo sapiens (Human)).